The primary structure comprises 342 residues: Serpentine receptor class delta-33 (342 aa).

7 helical membrane passes run 26–46 (IFVI…LLLL), 62–82 (IFLA…VTSM), 112–132 (YVGI…SMIY), 148–168 (IILC…CSNI), 205–225 (LIIL…VMYW), 261–281 (IIPL…QLGF), and 287–307 (YSYF…VVTI).

This sequence belongs to the nematode receptor-like protein srd family.

The protein localises to the membrane. This chain is Serpentine receptor class delta-33 (srd-33), found in Caenorhabditis elegans.